The following is a 581-amino-acid chain: Proline--tRNA ligase (581 aa).

The protein belongs to the class-II aminoacyl-tRNA synthetase family. ProS type 1 subfamily. As to quaternary structure, homodimer.

It is found in the cytoplasm. It catalyses the reaction tRNA(Pro) + L-proline + ATP = L-prolyl-tRNA(Pro) + AMP + diphosphate. Catalyzes the attachment of proline to tRNA(Pro) in a two-step reaction: proline is first activated by ATP to form Pro-AMP and then transferred to the acceptor end of tRNA(Pro). As ProRS can inadvertently accommodate and process non-cognate amino acids such as alanine and cysteine, to avoid such errors it has two additional distinct editing activities against alanine. One activity is designated as 'pretransfer' editing and involves the tRNA(Pro)-independent hydrolysis of activated Ala-AMP. The other activity is designated 'posttransfer' editing and involves deacylation of mischarged Ala-tRNA(Pro). The misacylated Cys-tRNA(Pro) is not edited by ProRS. This chain is Proline--tRNA ligase, found in Delftia acidovorans (strain DSM 14801 / SPH-1).